Reading from the N-terminus, the 340-residue chain is Ferredoxin--NADP reductase (340 aa).

Residues T20, D39, Q47, Y52, V92, F126, D293, and T334 each coordinate FAD.

It belongs to the ferredoxin--NADP reductase type 2 family. As to quaternary structure, homodimer. Requires FAD as cofactor.

The enzyme catalyses 2 reduced [2Fe-2S]-[ferredoxin] + NADP(+) + H(+) = 2 oxidized [2Fe-2S]-[ferredoxin] + NADPH. This is Ferredoxin--NADP reductase from Gluconobacter oxydans (strain 621H) (Gluconobacter suboxydans).